The following is a 391-amino-acid chain: Phosphoglycerate kinase (391 aa).

Substrate contacts are provided by residues 21-23 (DLN), arginine 36, 59-62 (HLGR), arginine 113, and arginine 146. ATP is bound by residues lysine 197, glutamate 319, and 345–348 (GGDT).

The protein belongs to the phosphoglycerate kinase family. Monomer.

The protein resides in the cytoplasm. The enzyme catalyses (2R)-3-phosphoglycerate + ATP = (2R)-3-phospho-glyceroyl phosphate + ADP. The protein operates within carbohydrate degradation; glycolysis; pyruvate from D-glyceraldehyde 3-phosphate: step 2/5. This is Phosphoglycerate kinase from Shewanella sp. (strain W3-18-1).